We begin with the raw amino-acid sequence, 86 residues long: Small ribosomal subunit protein bS20 (86 aa).

The segment at 1–25 is disordered; that stretch reads MANSASSRKRARQAVKRNKHNSQIR. Over residues 7-25 the composition is skewed to basic residues; it reads SRKRARQAVKRNKHNSQIR.

It belongs to the bacterial ribosomal protein bS20 family.

Binds directly to 16S ribosomal RNA. The polypeptide is Small ribosomal subunit protein bS20 (Vesicomyosocius okutanii subsp. Calyptogena okutanii (strain HA)).